The primary structure comprises 367 residues: tRNA 2-selenouridine synthase (367 aa).

Residues 12 to 135 form the Rhodanese domain; that stretch reads FLSGVAMLDV…MRGFLIETTD (124 aa). Residue cysteine 95 is the S-selanylcysteine intermediate of the active site.

It belongs to the SelU family. In terms of assembly, monomer.

The enzyme catalyses 5-methylaminomethyl-2-thiouridine(34) in tRNA + selenophosphate + (2E)-geranyl diphosphate + H2O + H(+) = 5-methylaminomethyl-2-selenouridine(34) in tRNA + (2E)-thiogeraniol + phosphate + diphosphate. The catalysed reaction is 5-methylaminomethyl-2-thiouridine(34) in tRNA + (2E)-geranyl diphosphate = 5-methylaminomethyl-S-(2E)-geranyl-thiouridine(34) in tRNA + diphosphate. It catalyses the reaction 5-methylaminomethyl-S-(2E)-geranyl-thiouridine(34) in tRNA + selenophosphate + H(+) = 5-methylaminomethyl-2-(Se-phospho)selenouridine(34) in tRNA + (2E)-thiogeraniol. It carries out the reaction 5-methylaminomethyl-2-(Se-phospho)selenouridine(34) in tRNA + H2O = 5-methylaminomethyl-2-selenouridine(34) in tRNA + phosphate. Functionally, involved in the post-transcriptional modification of the uridine at the wobble position (U34) of tRNA(Lys), tRNA(Glu) and tRNA(Gln). Catalyzes the conversion of 2-thiouridine (S2U-RNA) to 2-selenouridine (Se2U-RNA). Acts in a two-step process involving geranylation of 2-thiouridine (S2U) to S-geranyl-2-thiouridine (geS2U) and subsequent selenation of the latter derivative to 2-selenouridine (Se2U) in the tRNA chain. The protein is tRNA 2-selenouridine synthase of Cupriavidus necator (strain ATCC 17699 / DSM 428 / KCTC 22496 / NCIMB 10442 / H16 / Stanier 337) (Ralstonia eutropha).